Here is a 515-residue protein sequence, read N- to C-terminus: ATP synthase subunit alpha (515 aa).

171–178 (GDRQTGKT) contacts ATP.

The protein belongs to the ATPase alpha/beta chains family. F-type ATPases have 2 components, CF(1) - the catalytic core - and CF(0) - the membrane proton channel. CF(1) has five subunits: alpha(3), beta(3), gamma(1), delta(1), epsilon(1). CF(0) has three main subunits: a(1), b(2) and c(9-12). The alpha and beta chains form an alternating ring which encloses part of the gamma chain. CF(1) is attached to CF(0) by a central stalk formed by the gamma and epsilon chains, while a peripheral stalk is formed by the delta and b chains.

Its subcellular location is the cell inner membrane. The enzyme catalyses ATP + H2O + 4 H(+)(in) = ADP + phosphate + 5 H(+)(out). Produces ATP from ADP in the presence of a proton gradient across the membrane. The alpha chain is a regulatory subunit. This chain is ATP synthase subunit alpha, found in Xanthomonas campestris pv. campestris (strain 8004).